The primary structure comprises 111 residues: MGSSSFLVLMVSLALVTLVVVEGVKGGIEKAGVCPADNVRCFKSNPPQCHTDQDCLGERKCCYLHCGFKCVIPVKKLEEGGNKDEDVSGPHPEPGWEAKSPGSSSTGCPQI.

The first 23 residues, 1–23, serve as a signal peptide directing secretion; the sequence is MGSSSFLVLMVSLALVTLVVVEG. A WAP domain is found at 27-74; the sequence is GIEKAGVCPADNVRCFKSNPPQCHTDQDCLGERKCCYLHCGFKCVIPV. Disulfide bonds link Cys34–Cys62, Cys41–Cys66, Cys49–Cys61, and Cys55–Cys70. The segment at 80 to 111 is disordered; it reads GGNKDEDVSGPHPEPGWEAKSPGSSSTGCPQI. Residues 101 to 111 show a composition bias toward polar residues; that stretch reads PGSSSTGCPQI.

Its subcellular location is the secreted. Its function is as follows. Antibacterial protein. Putative acid-stable proteinase inhibitor. The protein is WAP four-disulfide core domain protein 12 (WFDC12) of Colobus guereza (Mantled guereza).